A 144-amino-acid chain; its full sequence is Large ribosomal subunit protein uL13 (144 aa).

It belongs to the universal ribosomal protein uL13 family. Part of the 50S ribosomal subunit.

Its function is as follows. This protein is one of the early assembly proteins of the 50S ribosomal subunit, although it is not seen to bind rRNA by itself. It is important during the early stages of 50S assembly. The protein is Large ribosomal subunit protein uL13 of Heliobacterium modesticaldum (strain ATCC 51547 / Ice1).